A 452-amino-acid polypeptide reads, in one-letter code: Pup--protein ligase (452 aa).

Position 9 (E9) interacts with Mg(2+). Residue R53 coordinates ATP. Residue Y55 participates in Mg(2+) binding. The Proton acceptor role is filled by D57. A Mg(2+)-binding site is contributed by E63. ATP is bound by residues T66 and W419.

Belongs to the Pup ligase/Pup deamidase family. Pup-conjugating enzyme subfamily. Post-translationally, pupylated at an undetermined lysine residue by the prokaryotic ubiquitin-like protein Pup, which leads to its degradation by the proteasome and thereby constitutes a negative auto-regulation.

It carries out the reaction ATP + [prokaryotic ubiquitin-like protein]-L-glutamate + [protein]-L-lysine = ADP + phosphate + N(6)-([prokaryotic ubiquitin-like protein]-gamma-L-glutamyl)-[protein]-L-lysine.. The protein operates within protein degradation; proteasomal Pup-dependent pathway. It participates in protein modification; protein pupylation. In terms of biological role, catalyzes the covalent attachment of the prokaryotic ubiquitin-like protein modifier Pup to the proteasomal substrate proteins, thereby targeting them for proteasomal degradation. This tagging system is termed pupylation. The ligation reaction likely involves the side-chain carboxylate of the C-terminal glutamate of Pup and the side-chain amino group of a substrate lysine. The protein is Pup--protein ligase (pafA) of Mycolicibacterium smegmatis (strain ATCC 700084 / mc(2)155) (Mycobacterium smegmatis).